The following is a 3014-amino-acid chain: Genome polyprotein (3014 aa).

N-acetylserine; by host is present on S2. The segment at 2 to 23 (STNPKPQRKTKRNTNRRPQDVK) is interaction with STAT1. The segment at 2 to 58 (STNPKPQRKTKRNTNRRPQDVKFPGGGQIVGGVYLLPRRGPRLGVRATRKTSERSQP) is interaction with EIF2AK2/PKR. The interval 2–59 (STNPKPQRKTKRNTNRRPQDVKFPGGGQIVGGVYLLPRRGPRLGVRATRKTSERSQPR) is interaction with DDX3X. The interval 2–75 (STNPKPQRKT…PKARQPTGRS (74 aa)) is disordered. Over 2–168 (STNPKPQRKT…EDGVNYATGN (167 aa)) the chain is Cytoplasmic. Short sequence motifs (nuclear localization signal) lie at residues 5 to 13 (PKPQRKTKR) and 38 to 43 (PRRGPR). Residues 7–16 (PQRKTKRNTN) are compositionally biased toward basic residues. Residues 32 to 47 (GGVYLLPRRGPRLGVR) show a composition bias toward low complexity. S53 is modified (phosphoserine; by host). 2 short sequence motifs (nuclear localization signal) span residues 58–64 (PRGRRQP) and 66–71 (PKARQP). 2 positions are modified to phosphoserine; by host: S99 and S116. The segment at 112 to 152 (PRRKSRNLGKVIDTLTCGFADLMGYIPLVGGPVGGVARALA) is important for endoplasmic reticulum and mitochondrial localization. An interaction with APOA2 region spans residues 122-173 (VIDTLTCGFADLMGYIPLVGGPVGGVARALAHGVRVLEDGVNYATGNLPGCS). Residues 164–167 (YATG) are important for lipid droplets localization. The helical transmembrane segment at 169 to 189 (LPGCSFSIFILALLSCLTVPT) threads the bilayer. A propeptide spans 178 to 191 (ILALLSCLTVPTSA) (ER anchor for the core protein, removed in mature form by host signal peptidase). Topologically, residues 190–358 (SAVPYRNASG…AGAHWGVLFA (169 aa)) are lumenal. N-linked (GlcNAc...) asparagine; by host glycosylation is found at N196, N209, and N234. Residues 265-296 (LAGGAALCSALYVGDACGAVFLVGQMFTYSPR) form an important for fusion region. N-linked (GlcNAc...) asparagine; by host glycosylation occurs at N305. A helical transmembrane segment spans residues 359–379 (AAYYASAANWAKVVLVLFLFA). Topologically, residues 380–726 (GVDANTRTVG…WEYIVLAFLL (347 aa)) are lumenal. The tract at residues 385–412 (TRTVGGSAAQGARGLASLFTPGPQQNLQ) is HVR1. Residues N417, N423, and N430 are each glycosylated (N-linked (GlcNAc...) (high mannose) asparagine; by host). 4 cysteine pairs are disulfide-bonded: C429/C553, C452/C459, C487/C495, and C504/C509. An N-linked (GlcNAc...) asparagine; by host glycan is attached at N448. An HVR2 region spans residues 475–479 (AAVSG). A CD81-binding 1 region spans residues 481–494 (SDDKPYCWHYPPRP). An N-linked (GlcNAc...) asparagine; by host glycan is attached at N533. The CD81-binding 2 stretch occupies residues 545 to 552 (PPTGNWFG). N557 carries N-linked (GlcNAc...) asparagine; by host glycosylation. C565 and C570 are disulfide-bonded. A glycan (N-linked (GlcNAc...) asparagine; by host) is linked at N578. 3 disulfide bridges follow: C582/C586, C598/C621, and C608/C645. N-linked (GlcNAc...) (high mannose) asparagine; by host glycans are attached at residues N624 and N646. C653 and C678 are disulfide-bonded. The segment at 661 to 672 (AELSPLLHTTTQ) is PKR/eIF2-alpha phosphorylation homology domain (PePHD). The helical transmembrane segment at 727–747 (LADARICTCLWIMLLVCQAEA) threads the bilayer. Residues 748–758 (ALENVIVLNAA) lie on the Lumenal side of the membrane. Residues 759-779 (AAAGTHGFFWGLLVICFAWHF) form a helical membrane-spanning segment. Residues 780–783 (KGRL) are Cytoplasmic-facing. A helical transmembrane segment spans residues 784–804 (VPGATYLCLGIWPLLLLLFLL). Over 805–814 (PQRALALDSS) the chain is Lumenal. Residues 815–835 (DGGTVGCLVLTILTIFTLTPG) form a helical membrane-spanning segment. Over 836–882 (YKKMVVLVIWWLQYFIARVEAFIHVWVPPLQVRGGRDAIIMLTCLFH) the chain is Cytoplasmic. A helical membrane pass occupies residues 883–903 (PALGFEVTKILLGILGPLYLL). Over 904 to 929 (QYSLIKLPYFIRARALLRACLLAKHL) the chain is Lumenal. The Peptidase C18 domain occupies 904 to 1027 (QYSLIKLPYF…DIREAGWRLL (124 aa)). A protease NS2-3 region spans residues 905–1207 (YSLIKLPYFI…PVENLETTMR (303 aa)). The S-palmitoyl cysteine; by host moiety is linked to residue C923. The helical transmembrane segment at 930–950 (ACGRYVQAALLHLGRLTGTYI) threads the bilayer. Residues 930–950 (ACGRYVQAALLHLGRLTGTYI) are interaction with host SCPS1. Over 951 to 1658 (YDHLAPMKDW…CMSADLEVIT (708 aa)) the chain is Cytoplasmic. Catalysis depends on for protease NS2 activity; shared with dimeric partner residues H953, E973, and C994. A Peptidase S29 domain is found at 1028 to 1209 (APITAYAQQT…ENLETTMRSP (182 aa)). Residues H1084 and D1108 each act as charge relay system; for serine protease NS3 activity in the active site. Residues C1124 and C1126 each coordinate Zn(2+). Residue S1166 is the Charge relay system; for serine protease NS3 activity of the active site. C1172 and H1176 together coordinate Zn(2+). Residues 1218–1370 (PAVPHEFQVG…PNIEEVALPS (153 aa)) enclose the Helicase ATP-binding domain. ATP is bound at residue 1231 to 1238 (APTGSGKS). Residues S1238 and E1318 each coordinate Mg(2+). The DECH box motif lies at 1317 to 1320 (DECH). Positions 1487-1499 (QRRGRTGRGRHGI) are RNA-binding. The chain crosses the membrane as a helical span at residues 1659 to 1679 (STWVLVGGVVAALAAYCLTVG). An NS3-binding region spans residues 1680-1691 (SVAIVGRIILSG). Residues 1680 to 1806 (SVAIVGRIIL…AVTSPLTTQQ (127 aa)) lie on the Cytoplasmic side of the membrane. Residues 1807–1827 (TLLFNILGGWVASQIAPPTAA) form a helical membrane-spanning segment. The Lumenal portion of the chain corresponds to 1828-1829 (TA). Residues 1830–1850 (FVVSGMAGAAVGSIGLGRVLI) form a helical membrane-spanning segment. Position 1851 (D1851) is a topological domain, cytoplasmic. The helical transmembrane segment at 1852 to 1872 (ILAGYGAGVAGALVAFKIMCG) threads the bilayer. Residues 1873–1882 (EKPTAEDLVN) are Lumenal-facing. The chain crosses the membrane as a helical span at residues 1883–1903 (LLPSILCPGALVVGVICAAVL). At 1904-1973 (RRHIGPGEGA…WIGEDYSTPC (70 aa)) the chain is on the cytoplasmic side. C1973 carries S-palmitoyl cysteine; by host lipidation. An intramembrane segment occupies 1974–2003 (DGTWLRAIWDWVCTALTDFKAWLQAKLLPQ). At 2004–2993 (LPGVPFLSCQ…YHSMSRARPR (990 aa)) the chain is on the cytoplasmic side. Residues C2012, C2030, C2032, and C2053 each contribute to the Zn(2+) site. The interval 2121-2209 (EFFTELDGVR…ASSSASQLSA (89 aa)) is FKBP8-binding. The interval 2121-2334 (EFFTELDGVR…VPPPRRKRKP (214 aa)) is transcriptional activation. The segment at 2136 to 2140 (PPCNP) is interaction with non-structural protein 4A. Disordered regions lie at residues 2187–2219 (AKRR…CTTQ), 2301–2337 (TWKQ…PVVL), and 2358–2413 (TQSI…SWST). Positions 2190-2441 (RLDRGSPPSL…ALITPCSAEE (252 aa)) are interaction with host SKP2. A phosphoserine; by host mark is found at S2195, S2198, S2202, S2205, S2208, and S2211. Low complexity predominate over residues 2195–2212 (SPPSLASSSASQLSAPSL). Residues 2211–2250 (SLKATCTTQGHHPDADLIEANLLWRQCMGGNITRVEAENK) form an ISDR region. The interaction with EIF2AK2/PKR stretch occupies residues 2211 to 2276 (SLKATCTTQG…REISVSADCF (66 aa)). Residues 2250-2307 (KVVILDSFEPLKADDDDREISVSADCFRRGPAFPPALPIWARPGYDPPLLETWKQPDY) form an NS4B-binding region. Residues 2300 to 2378 (ETWKQPDYDP…GTSSQPDSGP (79 aa)) are V3. Positions 2316–2327 (PLPPAGLPPVPP) are enriched in pro residues. An SH3-binding motif is present at residues 2323–2326 (PPVP). The Nuclear localization signal signature appears at 2328 to 2337 (PRRKRKPVVL). Positions 2358–2375 (TQSIEGQDSAVGTSSQPD) are enriched in polar residues. S2465 bears the Phosphoserine; by host mark. The RdRp catalytic domain maps to 2637-2755 (PMAFSYDTRC…ICESQGTHED (119 aa)). Residues D2643, D2741, and D2742 each contribute to the Mg(2+) site. Residues 2994–3014 (CILLCLLLLTVGVGIFLLPAR) form a helical membrane-spanning segment.

Belongs to the hepacivirus polyprotein family. In terms of assembly, homooligomer. Interacts with E1 (via C-terminus). Interacts with the non-structural protein 5A. Interacts (via N-terminus) with host STAT1 (via SH2 domain); this interaction results in decreased STAT1 phosphorylation and ubiquitin-mediated proteasome-dependent STAT1 degradation, leading to decreased IFN-stimulated gene transcription. Interacts with host STAT3; this interaction constitutively activates STAT3. Interacts with host LTBR receptor. Interacts with host TNFRSF1A receptor and possibly induces apoptosis. Interacts with host HNRPK. Interacts with host YWHAE. Interacts with host UBE3A/E6AP. Interacts with host DDX3X. Interacts with host APOA2. Interacts with host RXRA protein. Interacts with host SP110 isoform 3/Sp110b; this interaction sequesters the transcriptional corepressor SP110 away from the nucleus. Interacts with host CREB3 nuclear transcription protein; this interaction triggers cell transformation. Interacts with host ACY3. Interacts with host C1QR1. Interacts with host RBM24; this interaction, which enhances the interaction of the mature core protein with 5'-UTR, may inhibit viral translation and favor replication. Interacts with host EIF2AK2/PKR; this interaction induces the autophosphorylation of EIF2AK2. Part of the viral assembly initiation complex composed of NS2, E1, E2, NS3, NS4A, NS5A and the mature core protein. As to quaternary structure, forms a heterodimer with envelope glycoprotein E2. Interacts with mature core protein. Interacts with protease NS2. The heterodimer E1/E2 interacts with host CLDN1; this interaction plays a role in viral entry into host cell. Interacts with host SPSB2 (via C-terminus). Part of the viral assembly initiation complex composed of NS2, E1, E2, NS3, NS4A, NS5A and the mature core protein. Interacts with host NEURL3; this interaction prevents E1 binding to glycoprotein E2. Forms a heterodimer with envelope glycoprotein E1. Interacts with host CD81 and SCARB1 receptors; these interactions play a role in viral entry into host cell. Interacts with host EIF2AK2/PKR; this interaction inhibits EIF2AK2 and probably allows the virus to evade the innate immune response. Interacts with host CD209/DC-SIGN and CLEC4M/DC-SIGNR. Interact with host SPCS1; this interaction is essential for viral particle assembly. Interacts with protease NS2. The heterodimer E1/E2 interacts with host CLDN1; this interaction plays a role in viral entry into host cell. Part of the viral assembly initiation complex composed of NS2, E1, E2, NS3, NS4A, NS5A and the mature core protein. Interacts with host SLC3A2/4F2hc; the interaction may facilitate viral entry into host cell. Interacts with human PLSCR1. In terms of assembly, homohexamer. Homoheptamer. Interacts with protease NS2. As to quaternary structure, homodimer. Interacts with host SPCS1; this interaction is essential for viral particle assembly. Interacts with envelope glycoprotein E1. Interacts with envelope glycoprotein E2. Interacts with viroporin p7. Interacts with serine protease/helicase NS3. Part of the replication complex composed of NS2, NS3, NS4A, NS4B, NS5A and the RNA-directed RNA polymerase embedded in an ER-derived membranous web. Part of the viral assembly initiation complex composed of NS2, E1, E2, NS3, NS4A, NS5A and the mature core protein. Interacts with protease NS2. Interacts with non-structural protein 4A; this interaction stabilizes the folding of NS3 serine protease. NS3-NS4A interaction is essential for NS3 activation and allows membrane anchorage of the latter. NS3/NS4A complex also prevents phosphorylation of host IRF3, thus preventing the establishment of dsRNA induced antiviral state. Interacts with host MAVS; this interaction leads to the cleavage and inhibition of host MAVS. Interacts with host TICAM1; this interaction leads to the cleavage and inhibition of host TICAM1. Interacts with host TANK-binding kinase/TBK1; this interaction results in the inhibition of the association between TBK1 and IRF3, which leads to the inhibition of IRF3 activation. Interacts with host RBM24. Part of the replication complex composed of NS2, NS3, NS4A, NS4B, NS5A and the RNA-directed RNA polymerase embedded in an ER-derived membranous web. Part of the viral assembly initiation complex composed of NS2, E1, E2, NS3, NS4A, NS5A and the mature core protein. In terms of assembly, interacts with NS3 serine protease; this interaction stabilizes the folding of NS3 serine protease. NS3-NS4A interaction is essential for NS3 activation and allows membrane anchorage of the latter. Interacts with non-structural protein 5A (via N-terminus). Part of the replication complex composed of NS2, NS3, NS4A, NS4B, NS5A and the RNA-directed RNA polymerase embedded in an ER-derived membranous web. Part of the viral assembly initiation complex composed of NS2, E1, E2, NS3, NS4A, NS5A and the mature core protein. As to quaternary structure, homomultimer. Interacts with non-structural protein NS5A. Interacts with host PLA2G4C; this interaction likely initiates the recruitment of replication complexes to lipid droplets. Interacts with host STING; this interaction disrupts the interaction between STING and TBK1 thereby suppressing the interferon signaling. Part of the replication complex composed of NS2, NS3, NS4A, NS4B, NS5A and the RNA-directed RNA polymerase embedded in an ER-derived membranous web. Monomer. Homodimer; dimerization is required for RNA-binding. Interacts with the mature core protein. Interacts (via N-terminus) with non-structural protein 4A. Interacts with non-structural protein 4B. Interacts (via region D2) with RNA-directed RNA polymerase. Part of the viral assembly initiation complex composed of NS2, E1, E2, NS3, NS4A, NS5A and the mature core protein. Part of the replication complex composed of NS2, NS3, NS4A, NS4B, NS5A and the RNA-directed RNA polymerase embedded in an ER-derived membranous web. Interacts with host GRB2. Interacts with host BIN1. Interacts with host PIK3R1. Interacts with host SRCAP. Interacts with host FKBP8. Interacts (via C-terminus) with host VAPB (via MSP domain). Interacts with host EIF2AK2/PKR; this interaction leads to disruption of EIF2AK2 dimerization by NS5A and probably allows the virus to evade the innate immune response. Interacts (via N-terminus) with host PACSIN2 (via N-terminus); this interaction attenuates protein kinase C alpha-mediated phosphorylation of PACSIN2 by disrupting the interaction between PACSIN2 and PRKCA. Interacts (via N-terminus) with host SRC kinase (via SH2 domain). Interacts with most Src-family kinases. Interacts with host IFI27 and SKP2; promotes the ubiquitin-mediated proteasomal degradation of NS5A. Interacts with host GPS2. Interacts with host TNFRSF21; this interaction allows the modulation by the virus of JNK, p38 MAPK, STAT3, and Akt signaling pathways in a DR6-dependent manner. Interacts (via N-terminus) with host CIDEB (via N-terminus); this interaction seems to regulate the association of HCV particles with APOE. Interacts with host CHKA/Choline Kinase-alpha; CHKA bridges host PI4KA and NS5A and potentiates NS5A-stimulated PI4KA activity, which then facilitates the targeting of the ternary complex to the ER for viral replication. Interacts with host SPSB2 (via C-terminus); this interaction targets NS5A for ubiquitination and degradation. Interacts with host RAB18; this interaction may promote the association of NS5A and other replicase components with lipid droplets. Interacts (via region D2) with host PPIA/CYPA; the interaction stimulates RNA-binding ability of NS5A and is dependent on the peptidyl-prolyl cis-trans isomerase activity of PPIA/CYPA. Interacts with host TRIM14; this interaction induces the degradation of NS5A. In terms of assembly, homooligomer. Interacts with non-structural protein 5A. Interacts with host VAPB. Interacts with host PRK2/PKN2. Interacts with host HNRNPA1 and SEPT6; these interactions facilitate viral replication. Part of the replication complex composed of NS2, NS3, NS4A, NS4B, NS5A and the RNA-directed RNA polymerase. Zn(2+) serves as cofactor. The cofactor is Mg(2+). In terms of processing, specific enzymatic cleavages in vivo yield mature proteins. The structural proteins, core, E1, E2 and p7 are produced by proteolytic processing by host signal peptidases. The core protein precursor is synthesized as a 23 kDa, which is retained in the ER membrane through the hydrophobic signal peptide. Cleavage by the signal peptidase releases the 21 kDa mature core protein. The cleavage of the core protein precursor occurs between aminoacids 176 and 188 but the exact cleavage site is not known. Some degraded forms of the core protein appear as well during the course of infection. The other proteins (p7, NS2, NS3, NS4A, NS4B, NS5A and NS5B) are cleaved by the viral proteases. Autoprocessing between NS2 and NS3 is mediated by the NS2 cysteine protease catalytic domain and regulated by the NS3 N-terminal domain. Phosphorylated by host PKC and PKA. Post-translationally, ubiquitinated; mediated by UBE3A and leading to core protein subsequent proteasomal degradation. In terms of processing, highly N-glycosylated. Palmitoylation is required for NS2/3 autoprocessing and E2 recruitment to membranes. Post-translationally, palmitoylated. This modification may play a role in its polymerization or in protein-protein interactions. In terms of processing, phosphorylated on serines in a basal form termed p56. p58 is a hyperphosphorylated form of p56. p56 and p58 coexist in the cell in roughly equivalent amounts. Hyperphosphorylation is dependent on the presence of NS4A. Host CSNK1A1/CKI-alpha or RPS6KB1 kinases may be responsible for NS5A phosphorylation. Tyrosine phosphorylation is essential for the interaction with host SRC. Post-translationally, the N-terminus is phosphorylated by host PRK2/PKN2.

The protein localises to the host endoplasmic reticulum membrane. Its subcellular location is the host mitochondrion membrane. It localises to the virion. The protein resides in the host cytoplasm. It is found in the host nucleus. The protein localises to the host lipid droplet. Its subcellular location is the virion membrane. It localises to the host mitochondrion. The protein resides in the host cell membrane. It is found in the host perinuclear region. It catalyses the reaction Hydrolysis of four peptide bonds in the viral precursor polyprotein, commonly with Asp or Glu in the P6 position, Cys or Thr in P1 and Ser or Ala in P1'.. The enzyme catalyses a ribonucleoside 5'-triphosphate + H2O = a ribonucleoside 5'-diphosphate + phosphate + H(+). The catalysed reaction is ATP + H2O = ADP + phosphate + H(+). It carries out the reaction RNA(n) + a ribonucleoside 5'-triphosphate = RNA(n+1) + diphosphate. Inhibited by the antiviral drug hexamethylene amiloride. Inhibition by amantadine appears to be genotype-dependent. Also inhibited by long-alkyl-chain iminosugar derivatives. Its activity is regulated as follows. Activity is up-regulated by PRK2/PKN2-mediated phosphorylation. Its function is as follows. Packages viral RNA to form a viral nucleocapsid, and promotes virion budding. Participates in the viral particle production as a result of its interaction with the non-structural protein 5A. Binds RNA and may function as a RNA chaperone to induce the RNA structural rearrangements taking place during virus replication. Modulates viral translation initiation by interacting with viral IRES and 40S ribosomal subunit. Affects various cell signaling pathways, host immunity and lipid metabolism. Prevents the establishment of cellular antiviral state by blocking the interferon-alpha/beta (IFN-alpha/beta) and IFN-gamma signaling pathways and by blocking the formation of phosphorylated STAT1 and promoting ubiquitin-mediated proteasome-dependent degradation of STAT1. Activates STAT3 leading to cellular transformation. Regulates the activity of cellular genes, including c-myc and c-fos. May repress the promoter of p53, and sequester CREB3 and SP110 isoform 3/Sp110b in the cytoplasm. Represses cell cycle negative regulating factor CDKN1A, thereby interrupting an important check point of normal cell cycle regulation. Targets transcription factors involved in the regulation of inflammatory responses and in the immune response: suppresses TNF-induced NF-kappa-B activation, and activates AP-1. Binds to dendritic cells (DCs) via C1QR1, resulting in down-regulation of T-lymphocytes proliferation. Alters lipid metabolism by interacting with hepatocellular proteins involved in lipid accumulation and storage. Induces up-regulation of FAS promoter activity, and thereby contributes to the increased triglyceride accumulation in hepatocytes (steatosis). In terms of biological role, forms a heterodimer with envelope glycoprotein E2, which mediates virus attachment to the host cell, virion internalization through clathrin-dependent endocytosis and fusion with host membrane. Fusion with the host cell is most likely mediated by both E1 and E2, through conformational rearrangements of the heterodimer required for fusion rather than a classical class II fusion mechanism. E1/E2 heterodimer binds host apolipoproteins such as APOB and ApoE thereby forming a lipo-viro-particle (LVP). APOE associated to the LVP allows the initial virus attachment to cell surface receptors such as the heparan sulfate proteoglycans (HSPGs), syndecan-1 (SDC1), syndecan-1 (SDC2), the low-density lipoprotein receptor (LDLR) and scavenger receptor class B type I (SCARB1). The cholesterol transfer activity of SCARB1 allows E2 exposure and binding of E2 to SCARB1 and the tetraspanin CD81. E1/E2 heterodimer binding on CD81 activates the epithelial growth factor receptor (EGFR) signaling pathway. Diffusion of the complex E1-E2-EGFR-SCARB1-CD81 to the cell lateral membrane allows further interaction with Claudin 1 (CLDN1) and occludin (OCLN) to finally trigger HCV entry. Forms a heterodimer with envelope glycoprotein E1, which mediates virus attachment to the host cell, virion internalization through clathrin-dependent endocytosis and fusion with host membrane. Fusion with the host cell is most likely mediated by both E1 and E2, through conformational rearrangements of the heterodimer required for fusion rather than a classical class II fusion mechanism. The interaction between envelope glycoprotein E2 and host apolipoprotein E/APOE allows the proper assembly, maturation and infectivity of the viral particles. This interaction is probably promoted via the up-regulation of cellular autophagy by the virus. E1/E2 heterodimer binds host apolipoproteins such as APOB and APOE thereby forming a lipo-viro-particle (LVP). APOE associated to the LVP allows the initial virus attachment to cell surface receptors such as the heparan sulfate proteoglycans (HSPGs), syndecan-1 (SDC1), syndecan-1 (SDC2), the low-density lipoprotein receptor (LDLR) and scavenger receptor class B type I (SCARB1). The cholesterol transfer activity of SCARB1 allows E2 exposure and binding of E2 to SCARB1 and the tetraspanin CD81. E1/E2 heterodimer binding on CD81 activates the epithelial growth factor receptor (EGFR) signaling pathway. Diffusion of the complex E1-E2-EGFR-SCARB1-CD81 to the cell lateral membrane allows further interaction with Claudin 1 (CLDN1) and occludin (OCLN) to finally trigger HCV entry. Inhibits host EIF2AK2/PKR activation, preventing the establishment of an antiviral state. Viral ligand for CD209/DC-SIGN and CLEC4M/DC-SIGNR, which are respectively found on dendritic cells (DCs), and on liver sinusoidal endothelial cells and macrophage-like cells of lymph node sinuses. These interactions allow the capture of circulating HCV particles by these cells and subsequent facilitated transmission to permissive cells such as hepatocytes and lymphocyte subpopulations. The interaction between E2 and host amino acid transporter complex formed by SLC3A2 and SLC7A5/LAT1 may facilitate viral entry into host cell. Functionally, ion channel protein that acts as a viroporin and plays an essential role in the assembly, envelopment and secretion of viral particles. Regulates the host cell secretory pathway, which induces the intracellular retention of viral glycoproteins and favors assembly of viral particles. Creates a pore in acidic organelles and releases Ca(2+) and H(+) in the cytoplasm of infected cells, leading to a productive viral infection. High levels of cytoplasmic Ca(2+) may trigger membrane trafficking and transport of viral ER-associated proteins to viroplasms, sites of viral genome replication. This ionic imbalance induces the assembly of the inflammasome complex, which triggers the maturation of pro-IL-1beta into IL-1beta through the action of caspase-1. Targets also host mitochondria and induces mitochondrial depolarization. In addition of its role as a viroporin, acts as a lipid raft adhesion factor. Its function is as follows. Cysteine protease required for the proteolytic auto-cleavage between the non-structural proteins NS2 and NS3. The N-terminus of NS3 is required for the function of NS2 protease (active region NS2-3). Promotes the initiation of viral particle assembly by mediating the interaction between structural and non-structural proteins. In terms of biological role, displays three enzymatic activities: serine protease with a chymotrypsin-like fold, NTPase and RNA helicase. NS3 serine protease, in association with NS4A, is responsible for the cleavages of NS3-NS4A, NS4A-NS4B, NS4B-NS5A and NS5A-NS5B. The NS3/NS4A complex prevents phosphorylation of host IRF3, thus preventing the establishment of dsRNA induced antiviral state. The NS3/NS4A complex induces host amino acid transporter component SLC3A2, thus contributing to HCV propagation. NS3 RNA helicase binds to RNA and unwinds both dsDNA and dsRNA in the 3' to 5' direction, and likely resolves RNA complicated stable secondary structures in the template strand. Binds a single ATP and catalyzes the unzipping of a single base pair of dsRNA. Inhibits host antiviral proteins TBK1 and IRF3 thereby preventing the establishment of an antiviral state. Cleaves host MAVS/CARDIF thereby preventing the establishment of an antiviral state. Cleaves host TICAM1/TRIF, thereby disrupting TLR3 signaling and preventing the establishment of an antiviral state. Peptide cofactor which forms a non-covalent complex with the N-terminal of NS3 serine protease. The NS3/NS4A complex prevents phosphorylation of host IRF3, thus preventing the establishment of dsRNA induced antiviral state. The NS3/NS4A complex induces host amino acid transporter component SLC3A2, thus contributing to HCV propagation. Functionally, induces a specific membrane alteration that serves as a scaffold for the virus replication complex. This membrane alteration gives rise to the so-called ER-derived membranous web that contains the replication complex. NS4B self-interaction contributes to its function in membranous web formation. Promotes host TRIF protein degradation in a CASP8-dependent manner thereby inhibiting host TLR3-mediated interferon signaling. Disrupts the interaction between STING and TBK1 contributing to the inhibition of interferon signaling. Its function is as follows. Phosphorylated protein that is indispensable for viral replication and assembly. Both hypo- and hyperphosphorylated states are required for the viral life cycle. The hyperphosphorylated form of NS5A is an inhibitor of viral replication. Involved in RNA-binding and especially in binding to the viral genome. Zinc is essential for RNA-binding. Participates in the viral particle production as a result of its interaction with the mature viral core protein. Its interaction with host VAPB may target the viral replication complex to vesicles. Down-regulates viral IRES translation initiation. Mediates interferon resistance, presumably by interacting with and inhibiting host EIF2AK2/PKR. Prevents BIN1-induced apoptosis. Acts as a transcriptional activator of some host genes important for viral replication when localized in the nucleus. Via the interaction with host PACSIN2, modulates lipid droplet formation in order to promote virion assembly. Modulates TNFRSF21/DR6 signaling pathway for viral propagation. In terms of biological role, RNA-dependent RNA polymerase that performs primer-template recognition and RNA synthesis during viral replication. Initiates RNA transcription/replication at a flavin adenine dinucleotide (FAD), resulting in a 5'- FAD cap on viral RNAs. In this way, recognition of viral 5' RNA by host pattern recognition receptors can be bypassed, thereby evading activation of antiviral pathways. The sequence is that of Genome polyprotein from Hepatitis C virus genotype 5a (isolate SA13) (HCV).